Reading from the N-terminus, the 302-residue chain is Probable proteasome inhibitor (302 aa).

Residue A2 is modified to N-acetylalanine. 2 disordered regions span residues 151–188 (LDGKPKPVASRAQSSSETNEEPRYYDDTPNPLGPQIHP) and 259–302 (ARFD…SDFI). Over residues 259 to 269 (ARFDPYGPPGV) the composition is skewed to pro residues.

This sequence belongs to the proteasome inhibitor PI31 family.

Could play an important role in control of proteasome function. Inhibits the hydrolysis of protein and peptide substrates by the 20S proteasome. The chain is Probable proteasome inhibitor from Arabidopsis thaliana (Mouse-ear cress).